A 485-amino-acid chain; its full sequence is MSIRYESVEKLSEMIKNNEIKPSEVVKDIYDAIEETDPTIKSFLALDKDNAIKKAKELDELQAKGQMEGKLFGIPMGIKDNIITKDVETTCASKMLEGFVPIYESTVMNKLHDENAILIGKLNMDEFAMGGSTETSYFKQTVNPFDHTAVPGGSSGGSAAAVAAGLVPFSLGSDTGGSIRQPAAYCGVVGMKPTYGRVSRFGLVAFASSLDQIGPITRNVKDNAIVLETISGVDRNDSTSAPVEDVDFTSEIGKDIKGLKVALPKEYLGEGINEDVKEAVKNAVETLKSLGAEVDEVSLPNTKYGIPSYYVIASSEASANLARFDGIRYGYHSKEAQSLEELYKMSRSEGFGAEVKRRIFLGTFALSSGYYDAYYKKSQKVRTLIKNDFDKVFENYDVVVGPTAPTTAFNLGDEIDDPLTMYANDLLTTPVNLAGLPGISVPCGQSNGRPIGLQFIGKPFDEKTLYRVAYQYETQFNLHDAYEKL.

Active-site charge relay system residues include Lys79 and Ser154. The Acyl-ester intermediate role is filled by Ser178.

It belongs to the amidase family. GatA subfamily. In terms of assembly, heterotrimer of A, B and C subunits.

The catalysed reaction is L-glutamyl-tRNA(Gln) + L-glutamine + ATP + H2O = L-glutaminyl-tRNA(Gln) + L-glutamate + ADP + phosphate + H(+). Its function is as follows. Allows the formation of correctly charged Gln-tRNA(Gln) through the transamidation of misacylated Glu-tRNA(Gln) in organisms which lack glutaminyl-tRNA synthetase. The reaction takes place in the presence of glutamine and ATP through an activated gamma-phospho-Glu-tRNA(Gln). This is Glutamyl-tRNA(Gln) amidotransferase subunit A from Staphylococcus haemolyticus (strain JCSC1435).